Consider the following 316-residue polypeptide: Tyrosine recombinase XerC (316 aa).

Positions 11 to 97 (SGLRKPLDQF…SLRSFFDFLI (87 aa)) constitute a Core-binding (CB) domain. Residues 118 to 298 (PLPKNLDVDE…DFQHLADVYD (181 aa)) enclose the Tyr recombinase domain. Residues arginine 157, lysine 181, histidine 250, arginine 253, and histidine 276 contribute to the active site. The O-(3'-phospho-DNA)-tyrosine intermediate role is filled by tyrosine 285.

It belongs to the 'phage' integrase family. XerC subfamily. Forms a cyclic heterotetrameric complex composed of two molecules of XerC and two molecules of XerD.

Its subcellular location is the cytoplasm. Functionally, site-specific tyrosine recombinase, which acts by catalyzing the cutting and rejoining of the recombining DNA molecules. The XerC-XerD complex is essential to convert dimers of the bacterial chromosome into monomers to permit their segregation at cell division. It also contributes to the segregational stability of plasmids. The polypeptide is Tyrosine recombinase XerC (Vibrio vulnificus (strain CMCP6)).